The primary structure comprises 217 residues: Adenylate kinase (217 aa).

Residue 10–15 (GAGKGT) coordinates ATP. An NMP region spans residues 30–59 (STGDMFRAAMKEGTPLGLQAKQYMDRGDLV). AMP contacts are provided by residues Thr31, Arg36, 57–59 (DLV), 85–88 (GFPR), and Gln92. Residues 126-163 (GRRICRNCGATYHLIFHPPAKPGVCDKCGGELYQRADD) form an LID region. An ATP-binding site is contributed by Arg127. Zn(2+)-binding residues include Cys130 and Cys133. Position 136 to 137 (136 to 137 (TY)) interacts with ATP. Zn(2+) contacts are provided by Cys150 and Cys153. Positions 160 and 171 each coordinate AMP. Residue Gln199 coordinates ATP.

It belongs to the adenylate kinase family. As to quaternary structure, monomer.

It localises to the cytoplasm. The enzyme catalyses AMP + ATP = 2 ADP. It functions in the pathway purine metabolism; AMP biosynthesis via salvage pathway; AMP from ADP: step 1/1. Its function is as follows. Catalyzes the reversible transfer of the terminal phosphate group between ATP and AMP. Plays an important role in cellular energy homeostasis and in adenine nucleotide metabolism. The polypeptide is Adenylate kinase (Geobacillus stearothermophilus (Bacillus stearothermophilus)).